A 115-amino-acid polypeptide reads, in one-letter code: Small ribosomal subunit protein bS6 (115 aa).

This sequence belongs to the bacterial ribosomal protein bS6 family.

In terms of biological role, binds together with bS18 to 16S ribosomal RNA. This is Small ribosomal subunit protein bS6 from Syntrophotalea carbinolica (strain DSM 2380 / NBRC 103641 / GraBd1) (Pelobacter carbinolicus).